Here is a 526-residue protein sequence, read N- to C-terminus: Probable carboxypeptidase 2 (526 aa).

Positions 1-21 are cleaved as a signal peptide; sequence MVAYRLLALISLGLGSHCASA. An N-linked (GlcNAc...) asparagine glycan is attached at asparagine 46. The segment at 53 to 76 is disordered; the sequence is PAFTSPGTVPRGFSDGTSGPTRDE. Residues 71-351 enclose the Peptidase M14 domain; the sequence is GPTRDETMEG…VMAKSILQTA (281 aa). The N-linked (GlcNAc...) asparagine glycan is linked to asparagine 116. Residues histidine 136, glutamate 139, and histidine 224 each coordinate Zn(2+). Catalysis depends on glutamate 322, which acts as the Proton donor/acceptor. N-linked (GlcNAc...) asparagine glycosylation is found at asparagine 393 and asparagine 459.

It belongs to the peptidase M14 family. Zn(2+) serves as cofactor.

The protein resides in the secreted. Extracellular metalloprotease that contributes to pathogenicity. This is Probable carboxypeptidase 2 (MCPB) from Arthroderma benhamiae (strain ATCC MYA-4681 / CBS 112371) (Trichophyton mentagrophytes).